We begin with the raw amino-acid sequence, 258 residues long: 5'-nucleotidase SurE (258 aa).

4 residues coordinate a divalent metal cation: aspartate 8, aspartate 9, serine 40, and asparagine 93.

This sequence belongs to the SurE nucleotidase family. A divalent metal cation is required as a cofactor.

It is found in the cytoplasm. It carries out the reaction a ribonucleoside 5'-phosphate + H2O = a ribonucleoside + phosphate. In terms of biological role, nucleotidase that shows phosphatase activity on nucleoside 5'-monophosphates. This chain is 5'-nucleotidase SurE, found in Afipia carboxidovorans (strain ATCC 49405 / DSM 1227 / KCTC 32145 / OM5) (Oligotropha carboxidovorans).